Consider the following 148-residue polypeptide: Large ribosomal subunit protein bL19 (148 aa).

It belongs to the bacterial ribosomal protein bL19 family.

Its function is as follows. This protein is located at the 30S-50S ribosomal subunit interface and may play a role in the structure and function of the aminoacyl-tRNA binding site. The polypeptide is Large ribosomal subunit protein bL19 (Paramagnetospirillum magneticum (strain ATCC 700264 / AMB-1) (Magnetospirillum magneticum)).